The primary structure comprises 159 residues: SsrA-binding protein (159 aa).

This sequence belongs to the SmpB family.

The protein localises to the cytoplasm. Required for rescue of stalled ribosomes mediated by trans-translation. Binds to transfer-messenger RNA (tmRNA), required for stable association of tmRNA with ribosomes. tmRNA and SmpB together mimic tRNA shape, replacing the anticodon stem-loop with SmpB. tmRNA is encoded by the ssrA gene; the 2 termini fold to resemble tRNA(Ala) and it encodes a 'tag peptide', a short internal open reading frame. During trans-translation Ala-aminoacylated tmRNA acts like a tRNA, entering the A-site of stalled ribosomes, displacing the stalled mRNA. The ribosome then switches to translate the ORF on the tmRNA; the nascent peptide is terminated with the 'tag peptide' encoded by the tmRNA and targeted for degradation. The ribosome is freed to recommence translation, which seems to be the essential function of trans-translation. The sequence is that of SsrA-binding protein from Coxiella burnetii (strain CbuK_Q154) (Coxiella burnetii (strain Q154)).